Reading from the N-terminus, the 468-residue chain is Probable ubiquitin carboxyl-terminal hydrolase R319 (468 aa).

The region spanning Thr-42–Ser-462 is the USP domain. The active-site Nucleophile is Cys-51. His-420 (proton acceptor) is an active-site residue.

Belongs to the peptidase C19 family.

The enzyme catalyses Thiol-dependent hydrolysis of ester, thioester, amide, peptide and isopeptide bonds formed by the C-terminal Gly of ubiquitin (a 76-residue protein attached to proteins as an intracellular targeting signal).. This chain is Probable ubiquitin carboxyl-terminal hydrolase R319, found in Acanthamoeba polyphaga (Amoeba).